The chain runs to 283 residues: Methyltransferase cpsF (283 aa).

This sequence belongs to the methyltransferase superfamily. LaeA methyltransferase family.

The catalysed reaction is campesine A + S-adenosyl-L-methionine = campesine B + S-adenosyl-L-homocysteine + H(+). The protein operates within alkaloid biosynthesis. In terms of biological role, methyltransferase; part of the gene cluster that mediates the biosynthesis of campesine G, a dimeric indole piperazine alkaloid that shows good insecticidal activity Galleria mellonella. Within the pathway, cpsF methylates campesine A at N13 of piperazine ring to produce campesine B. The non-canonical non-ribosomal peptide synthetase cpsA catalyzes the first steps of the pathway by producing L-tryptophanal and L-valinal from their respective amino-acids. These products condensate spontaneously to form trypyl-valyl pyrazine also known as didehydrocampesine A. The NmrA-like family domain-containing oxidoreductase cpsB is the next enzyme in cps pathway and reduces the unstable didehydrocampesine A to campesine A. The methyltransferase cpsF and the acetyltransferase cpsE both recognize N13 of piperazine ring to carry out methylation and acetylation of campesine A to produce campesine C and B, respectively. The cytochrome P450 monooxygenase cpsD then acts as a dimerase that catalyzes oxidative heterocoupling between campesine B and C to produce heterodimers with unexpected 6/5/6/6/6/6/5/6 eight-ring scaffold called campesine D. Finally,the cytochrome P450 monooxygenase cpsC is a regioselective dehydrogenase that catalyzes dehydrogenation reaction towards C2-N1 to produce campesine G. This chain is Methyltransferase cpsF, found in Aspergillus campestris (strain IBT 28561).